A 296-amino-acid polypeptide reads, in one-letter code: SPbeta prophage-derived endonuclease YokF (296 aa).

An N-terminal signal peptide occupies residues 1–19 (MKKVLLGFAAFTLSLSLAA). Cysteine 20 carries N-palmitoyl cysteine lipidation. A lipid anchor (S-diacylglycerol cysteine) is attached at cysteine 20. Residues 20–65 (CSSNDSEKVSTEKETPQASTDVEKKTEQKESTKEKTADKSKEKDKK) form a disordered region. Basic and acidic residues predominate over residues 24 to 65 (DSEKVSTEKETPQASTDVEKKTEQKESTKEKTADKSKEKDKK). One can recognise a TNase-like domain in the interval 66 to 199 (ELVDVTLDRA…KSEKLSIWSK (134 aa)). Aspartate 79 is a Ca(2+) binding site. Arginine 93 is an active-site residue. 2 residues coordinate Ca(2+): aspartate 98 and threonine 99. Active-site residues include glutamate 101 and arginine 144. Residues 218–296 (AVKKATTSKP…RDHDNYACER (79 aa)) are disordered. The segment covering 219–244 (VKKATTSKPAATQPTTPKASSETSTT) has biased composition (low complexity). The span at 284-296 (KMDRDHDNYACER) shows a compositional bias: basic and acidic residues.

It depends on Ca(2+) as a cofactor. Cu(2+) serves as cofactor. Requires Mn(2+) as cofactor.

The protein resides in the cell membrane. Inhibited by aurintricalboxylic acid but not by Zn(2+), Mn(2+), Hg(2+), 2-mercaptoethanol and sodium citrate. Neither inhibited nor activated by ATP. Catalyzes the hydrolysis of supercoiled double and single strand DNA and RNA. Involved in chromosomal DNA degradation and cell death caused by thermal stress. This is SPbeta prophage-derived endonuclease YokF (yokF) from Bacillus subtilis (strain 168).